The chain runs to 318 residues: Ribonuclease Z (318 aa).

Zn(2+) contacts are provided by His62, His64, Asp66, His67, His139, Asp210, and His268. Catalysis depends on Asp66, which acts as the Proton acceptor.

It belongs to the RNase Z family. Homodimer. The cofactor is Zn(2+).

It carries out the reaction Endonucleolytic cleavage of RNA, removing extra 3' nucleotides from tRNA precursor, generating 3' termini of tRNAs. A 3'-hydroxy group is left at the tRNA terminus and a 5'-phosphoryl group is left at the trailer molecule.. Zinc phosphodiesterase, which displays some tRNA 3'-processing endonuclease activity. Probably involved in tRNA maturation, by removing a 3'-trailer from precursor tRNA. The chain is Ribonuclease Z from Microcystis aeruginosa (strain NIES-843 / IAM M-2473).